We begin with the raw amino-acid sequence, 138 residues long: Small ribosomal subunit protein uS12 (138 aa).

A compositionally biased stretch (polar residues) spans 1-22 (MPTINQLVRQGRKSISTKSDSP). The segment at 1–45 (MPTINQLVRQGRKSISTKSDSPALNFGYNSKKKSLTNNPAPQKRG) is disordered. Residue D102 is modified to 3-methylthioaspartic acid.

It belongs to the universal ribosomal protein uS12 family. In terms of assembly, part of the 30S ribosomal subunit. Contacts proteins S8 and S17. May interact with IF1 in the 30S initiation complex.

With S4 and S5 plays an important role in translational accuracy. Its function is as follows. Interacts with and stabilizes bases of the 16S rRNA that are involved in tRNA selection in the A site and with the mRNA backbone. Located at the interface of the 30S and 50S subunits, it traverses the body of the 30S subunit contacting proteins on the other side and probably holding the rRNA structure together. The combined cluster of proteins S8, S12 and S17 appears to hold together the shoulder and platform of the 30S subunit. The protein is Small ribosomal subunit protein uS12 of Lacticaseibacillus paracasei (strain ATCC 334 / BCRC 17002 / CCUG 31169 / CIP 107868 / KCTC 3260 / NRRL B-441) (Lactobacillus paracasei).